The following is a 958-amino-acid chain: Glucoamylase 1 (958 aa).

The first 22 residues, methionine 1–alanine 22, serve as a signal peptide directing secretion. N-linked (GlcNAc...) asparagine glycans are attached at residues asparagine 61, asparagine 78, asparagine 107, asparagine 197, asparagine 403, and asparagine 416. Catalysis depends on residues aspartate 470 and glutamate 473. 3 N-linked (GlcNAc...) asparagine glycosylation sites follow: asparagine 513, asparagine 580, and asparagine 602. Aspartate 638 acts as the Proton donor in catalysis. Asparagine 813 and asparagine 907 each carry an N-linked (GlcNAc...) asparagine glycan.

The protein belongs to the glycosyl hydrolase 31 family.

The catalysed reaction is Hydrolysis of terminal (1-&gt;4)-linked alpha-D-glucose residues successively from non-reducing ends of the chains with release of beta-D-glucose.. This glucoamylase has a specificity toward both alpha-1,4 and alpha-1,6 linkages. This chain is Glucoamylase 1 (GAM1), found in Schwanniomyces occidentalis (Yeast).